A 299-amino-acid chain; its full sequence is F-actin-capping protein subunit alpha-3 (299 aa).

A Phosphoserine modification is found at Ser290.

The protein belongs to the F-actin-capping protein alpha subunit family. As to quaternary structure, component of the F-actin capping complex, composed of a heterodimer of an alpha and a beta subunit. Component of the WASH complex, composed of F-actin-capping protein subunit alpha (CAPZA1, CAPZA2 or CAPZA3), F-actin-capping protein subunit beta (CAPZB), WASHC1, WASHC2, WASHC3, WASHC4 and WASHC5.

Its function is as follows. F-actin-capping proteins bind in a Ca(2+)-independent manner to the fast growing ends of actin filaments (barbed end) thereby blocking the exchange of subunits at these ends. Unlike other capping proteins (such as gelsolin and severin), these proteins do not sever actin filaments. May play a role in the morphogenesis of spermatid. In Macaca fascicularis (Crab-eating macaque), this protein is F-actin-capping protein subunit alpha-3 (CAPZA3).